The primary structure comprises 152 residues: Xanthine-guanine phosphoribosyltransferase (152 aa).

Residues 37–38 (RG), arginine 69, and 88–96 (DDLVDTGGT) contribute to the 5-phospho-alpha-D-ribose 1-diphosphate site. Residue arginine 69 coordinates GMP. Aspartate 89 is a Mg(2+) binding site. The guanine site is built by aspartate 92 and isoleucine 135. 2 residues coordinate xanthine: aspartate 92 and isoleucine 135. Residues 92 to 96 (DTGGT) and 134 to 135 (WI) each bind GMP.

This sequence belongs to the purine/pyrimidine phosphoribosyltransferase family. XGPT subfamily. In terms of assembly, homotetramer. Mg(2+) serves as cofactor.

Its subcellular location is the cell inner membrane. It catalyses the reaction GMP + diphosphate = guanine + 5-phospho-alpha-D-ribose 1-diphosphate. The catalysed reaction is XMP + diphosphate = xanthine + 5-phospho-alpha-D-ribose 1-diphosphate. The enzyme catalyses IMP + diphosphate = hypoxanthine + 5-phospho-alpha-D-ribose 1-diphosphate. It functions in the pathway purine metabolism; GMP biosynthesis via salvage pathway; GMP from guanine: step 1/1. It participates in purine metabolism; XMP biosynthesis via salvage pathway; XMP from xanthine: step 1/1. In terms of biological role, purine salvage pathway enzyme that catalyzes the transfer of the ribosyl-5-phosphate group from 5-phospho-alpha-D-ribose 1-diphosphate (PRPP) to the N9 position of the 6-oxopurines guanine and xanthine to form the corresponding ribonucleotides GMP (guanosine 5'-monophosphate) and XMP (xanthosine 5'-monophosphate), with the release of PPi. To a lesser extent, also acts on hypoxanthine. In Escherichia fergusonii (strain ATCC 35469 / DSM 13698 / CCUG 18766 / IAM 14443 / JCM 21226 / LMG 7866 / NBRC 102419 / NCTC 12128 / CDC 0568-73), this protein is Xanthine-guanine phosphoribosyltransferase.